We begin with the raw amino-acid sequence, 72 residues long: Putative snRNP Sm-like protein (72 aa).

In terms of domain architecture, Sm spans 4-72; sequence RPLDILNDAL…RGDNVVYVSP (69 aa).

Belongs to the snRNP Sm proteins family.

This Methanococcoides burtonii (strain DSM 6242 / NBRC 107633 / OCM 468 / ACE-M) protein is Putative snRNP Sm-like protein.